Here is a 1358-residue protein sequence, read N- to C-terminus: DNA-directed RNA polymerase subunit beta (1358 aa).

Over residues 1033 to 1051 the composition is skewed to basic and acidic residues; sequence QGLEDRKKEHEARFDDKKG. Positions 1033–1053 are disordered; sequence QGLEDRKKEHEARFDDKKGKL.

The protein belongs to the RNA polymerase beta chain family. The RNAP catalytic core consists of 2 alpha, 1 beta, 1 beta' and 1 omega subunit. When a sigma factor is associated with the core the holoenzyme is formed, which can initiate transcription.

The catalysed reaction is RNA(n) + a ribonucleoside 5'-triphosphate = RNA(n+1) + diphosphate. In terms of biological role, DNA-dependent RNA polymerase catalyzes the transcription of DNA into RNA using the four ribonucleoside triphosphates as substrates. This chain is DNA-directed RNA polymerase subunit beta, found in Marinobacter nauticus (strain ATCC 700491 / DSM 11845 / VT8) (Marinobacter aquaeolei).